Here is a 293-residue protein sequence, read N- to C-terminus: AKT-interacting protein (293 aa).

Over residues 1–11 (MNPFWSMSTNA) the composition is skewed to polar residues. Residues 1-44 (MNPFWSMSTNAGRKRSDGEEQSGSGEQRASPARPPFGKKQLPSI) are disordered. The UBC core domain occupies 75-223 (YLEYSLLAEF…VVDSVKLCNS (149 aa)). Residues 260–293 (RPEDFNKGLPVSGLSWVKPGSTQPFSKEDNPLQT) are disordered.

Belongs to the ubiquitin-conjugating enzyme family. FTS subfamily.

It is found in the cytoplasm. It localises to the cell membrane. Its function is as follows. May function to promote vesicle trafficking and/or fusion. May also regulate apoptosis. The sequence is that of AKT-interacting protein (aktip) from Danio rerio (Zebrafish).